Here is a 234-residue protein sequence, read N- to C-terminus: Pepsin inhibitor Dit33 (234 aa).

An N-terminal signal peptide occupies residues 1–17; sequence MKILFCFVLLAIAALRA. A disulfide bridge links Cys135 with Cys230. Positions 200 to 222 are disordered; sequence RHETSSQPSDATTISTTTQAPVE. Positions 204–219 are enriched in polar residues; sequence SSQPSDATTISTTTQA.

The protein belongs to the protease inhibitor I33 family.

Its subcellular location is the secreted. Aspartyl protease inhibitor. This chain is Pepsin inhibitor Dit33 (DIT33), found in Dirofilaria immitis (Canine heartworm).